Reading from the N-terminus, the 151-residue chain is Small ribosomal subunit protein uS15 (151 aa).

The segment covering 1-11 has biased composition (basic residues); sequence MPHRSRHKKGR. The segment at 1 to 24 is disordered; sequence MPHRSRHKKGRSSSVRPPHPTVPT.

Belongs to the universal ribosomal protein uS15 family. As to quaternary structure, part of the 30S ribosomal subunit.

The sequence is that of Small ribosomal subunit protein uS15 from Pyrobaculum calidifontis (strain DSM 21063 / JCM 11548 / VA1).